Consider the following 182-residue polypeptide: Transmembrane protein 11 homolog, mitochondrial (182 aa).

Phosphoserine is present on serine 25. 2 helical membrane passes run 70–89 (TAVA…RDRP) and 91–108 (IAAP…LYTV).

The protein belongs to the TMEM11 family.

It localises to the mitochondrion inner membrane. In terms of biological role, plays a role in mitochondrial morphogenesis. The polypeptide is Transmembrane protein 11 homolog, mitochondrial (Pmi) (Drosophila melanogaster (Fruit fly)).